A 270-amino-acid chain; its full sequence is Formamidopyrimidine-DNA glycosylase (270 aa).

Residue Pro-2 is the Schiff-base intermediate with DNA of the active site. Glu-3 serves as the catalytic Proton donor. Lys-58 functions as the Proton donor; for beta-elimination activity in the catalytic mechanism. Residues His-91, Arg-110, and Arg-151 each coordinate DNA. Residues 236–270 (FVYGRGGQPCKVCGTELREVKLGQRASVFCPKCQR) form an FPG-type zinc finger. Arg-260 acts as the Proton donor; for delta-elimination activity in catalysis.

It belongs to the FPG family. As to quaternary structure, monomer. Zn(2+) is required as a cofactor.

The catalysed reaction is Hydrolysis of DNA containing ring-opened 7-methylguanine residues, releasing 2,6-diamino-4-hydroxy-5-(N-methyl)formamidopyrimidine.. The enzyme catalyses 2'-deoxyribonucleotide-(2'-deoxyribose 5'-phosphate)-2'-deoxyribonucleotide-DNA = a 3'-end 2'-deoxyribonucleotide-(2,3-dehydro-2,3-deoxyribose 5'-phosphate)-DNA + a 5'-end 5'-phospho-2'-deoxyribonucleoside-DNA + H(+). Functionally, involved in base excision repair of DNA damaged by oxidation or by mutagenic agents. Acts as a DNA glycosylase that recognizes and removes damaged bases. Has a preference for oxidized purines, such as 7,8-dihydro-8-oxoguanine (8-oxoG). Has AP (apurinic/apyrimidinic) lyase activity and introduces nicks in the DNA strand. Cleaves the DNA backbone by beta-delta elimination to generate a single-strand break at the site of the removed base with both 3'- and 5'-phosphates. This chain is Formamidopyrimidine-DNA glycosylase, found in Pseudomonas entomophila (strain L48).